The primary structure comprises 219 residues: Interleukin-12 subunit alpha (219 aa).

The signal sequence occupies residues 1–22; it reads MCPARSLLLVATLVLLDYLSLA. 2 N-linked (GlcNAc...) asparagine glycosylation sites follow: Asn-24 and Asn-93. 3 disulfides stabilise this stretch: Cys-37-Cys-110, Cys-64-Cys-196, and Cys-85-Cys-123.

The protein belongs to the IL-6 superfamily. In terms of assembly, heterodimer with IL12B; disulfide-linked. This heterodimer is known as interleukin IL-12. Heterodimer with EBI3/IL27B; not disulfide-linked. This heterodimer is known as interleukin IL-35. Interacts with NBR1; this interaction promotes IL-12 secretion.

The protein resides in the secreted. Heterodimerizes with IL12B to form the IL-12 cytokine or with EBI3/IL27B to form the IL-35 cytokine. IL-12 is primarily produced by professional antigen-presenting cells (APCs) such as B-cells and dendritic cells (DCs) as well as macrophages and granulocytes and regulates T-cell and natural killer-cell responses, induces the production of interferon-gamma (IFN-gamma), favors the differentiation of T-helper 1 (Th1) cells and is an important link between innate resistance and adaptive immunity. Mechanistically, exerts its biological effects through a receptor composed of IL12R1 and IL12R2 subunits. Binding to the receptor results in the rapid tyrosine phosphorylation of a number of cellular substrates including the JAK family kinases TYK2 and JAK2. In turn, recruited STAT4 gets phosphorylated and translocates to the nucleus where it regulates cytokine/growth factor responsive genes. As part of IL-35, plays essential roles in maintaining the immune homeostasis of the liver microenvironment and also functions as an immune-suppressive cytokine. Mediates biological events through unconventional receptors composed of IL12RB2 and gp130/IL6ST heterodimers or homodimers. Signaling requires the transcription factors STAT1 and STAT4, which form a unique heterodimer that binds to distinct DNA sites. This is Interleukin-12 subunit alpha (IL12A) from Papio anubis (Olive baboon).